The following is a 761-amino-acid chain: Hyperosmolality-gated Ca2+ permeable channel 1.6 (761 aa).

A run of 10 helical transmembrane segments spans residues 7-27, 101-121, 156-176, 375-395, 419-439, 467-487, 512-532, 583-603, 630-650, and 653-673; these read IGVAAAINIVTAFAFLLAFAI, IYLLGLKIFFPIACVAFTTMV, PRFWVHLCMAYAITFWTCFIL, LIVGVAYFFLTFFFMIPIAFV, LLKSIIQGFLPGIALKIFLLF, FYMFQFINVFLGSIVTGTAFQ, ATFFITYIMVDGWAGVAGEIL, AAVSPILLPFILVFFGLAFVV, VVTALVVSQLLLMGLLSTKHA, and STPLLLVLPLLTIGFHKHCKN. Over residues 718 to 731 the composition is skewed to basic and acidic residues; it reads RVGEDPEPEEKLES. The interval 718–761 is disordered; sequence RVGEDPEPEEKLESDMSPPDLVATKRWSWRNTPLPSKDSCREIP.

It belongs to the CSC1 (TC 1.A.17) family.

Its subcellular location is the membrane. Functionally, acts as an osmosensitive calcium-permeable cation channel. The polypeptide is Hyperosmolality-gated Ca2+ permeable channel 1.6 (Arabidopsis thaliana (Mouse-ear cress)).